The following is a 273-amino-acid chain: Ribosomal RNA small subunit methyltransferase A (273 aa).

The S-adenosyl-L-methionine site is built by Asn-18, Leu-20, Gly-45, Glu-66, Asp-91, and Asn-113.

This sequence belongs to the class I-like SAM-binding methyltransferase superfamily. rRNA adenine N(6)-methyltransferase family. RsmA subfamily.

It localises to the cytoplasm. It catalyses the reaction adenosine(1518)/adenosine(1519) in 16S rRNA + 4 S-adenosyl-L-methionine = N(6)-dimethyladenosine(1518)/N(6)-dimethyladenosine(1519) in 16S rRNA + 4 S-adenosyl-L-homocysteine + 4 H(+). Its function is as follows. Specifically dimethylates two adjacent adenosines (A1518 and A1519) in the loop of a conserved hairpin near the 3'-end of 16S rRNA in the 30S particle. May play a critical role in biogenesis of 30S subunits. This Shigella boydii serotype 4 (strain Sb227) protein is Ribosomal RNA small subunit methyltransferase A.